A 286-amino-acid chain; its full sequence is ATP synthase gamma chain (286 aa).

Belongs to the ATPase gamma chain family. As to quaternary structure, F-type ATPases have 2 components, CF(1) - the catalytic core - and CF(0) - the membrane proton channel. CF(1) has five subunits: alpha(3), beta(3), gamma(1), delta(1), epsilon(1). CF(0) has three main subunits: a, b and c.

The protein resides in the cell inner membrane. Produces ATP from ADP in the presence of a proton gradient across the membrane. The gamma chain is believed to be important in regulating ATPase activity and the flow of protons through the CF(0) complex. This is ATP synthase gamma chain from Solibacter usitatus (strain Ellin6076).